The primary structure comprises 394 residues: Envelope glycoprotein D (394 aa).

Positions 1-25 are cleaved as a signal peptide; it reads MGGAAARLGAVILFVVIVGLHGVRG. Positions 25 to 57 are interaction with TNFRSF14; that stretch reads GKYALADASLKMADPNRFRGKDLPVPDRLTDPP. Over 26-339 the chain is Virion surface; the sequence is KYALADASLK…PYHPPATPNN (314 aa). Residue His64 coordinates Zn(2+). Cystine bridges form between Cys91/Cys214, Cys131/Cys227, and Cys143/Cys152. Asn119 and Asn146 each carry an N-linked (GlcNAc...) asparagine; by host glycan. Asp240 provides a ligand contact to Zn(2+). Residues 261-305 are profusion; that stretch reads LKIAGWHGPKAPYTSTLLPPELSETPNATQPELAPEDPEDSALLE. The interval 275–301 is disordered; that stretch reads STLLPPELSETPNATQPELAPEDPEDS. N-linked (GlcNAc...) asparagine; by host glycosylation is present at Asn287. Residues 340-364 traverse the membrane as a helical segment; that stretch reads MGLIAGAVGGSLLAALVICGIVYWM. At 365 to 394 the chain is on the intravirion side; that stretch reads RRRTQKGPKRIRLPHIREDDQPSSHQPLFY. The tract at residues 374 to 394 is disordered; sequence RIRLPHIREDDQPSSHQPLFY.

It belongs to the herpesviridae glycoprotein D family. In terms of assembly, homodimer. Interacts with host receptor TNFRSF14. Interacts with host receptor NECTIN1. Interacts (via profusion domain) with gB; this interaction occurs in the absence of gH/gL. Interacts (via profusion domain) with gH/gL heterodimer; this interaction occurs in the absence of gB. Associates with the gB-gH/gL-gD complex. Interacts (via C-terminus) with UL11 tegument protein. Interacts with host RSAD2.

The protein resides in the virion membrane. Its subcellular location is the host Golgi apparatus. Functionally, envelope glycoprotein that binds to the host cell entry receptors NECTIN1, TNFRSF14/HVEM and 3-O-sulfated heparan sulfate, promoting the virus entry into host cells. May trigger fusion with host membrane, by recruiting the fusion machinery composed of gB and gH/gL. The polypeptide is Envelope glycoprotein D (gD) (Homo sapiens (Human)).